Here is a 588-residue protein sequence, read N- to C-terminus: MSAGEVERLVSELSGGTGGDEEEEWLYGDENEVERPEEENASANPPSGIEDETAENGVPKPKVTETEDDSDSDSDDDEDDVHVTIGDIKTGAPQYGSYGTAPVNLNIKTGGRVYGTTGTKVKGVDLDAPGSINGVPLLEVDLDSFEDKPWRKPGADLSDYFNYGFNEDTWKAYCEKQKRIRMGLEVIPVTSTTNKITAEDCTMEVTPGAEIQDGRFNLFKVQQGRTGNSEKETALPSAKAEFTSPPSLFKTGLPPSRNSTSSQSQTSTASRKANSSVGKWQDRYGRAESPDLRRLPGAIDVIGQTITISRVEGRRRANENSNIQVLSERSATAVDNNFSKPPPFFPPGAPPTHLPPPPFLPPPPTVSTAPPLIPPPGIPITVPPPGFPPPPGAPPPSLIPTIESGHSSGYDSRSARAFPYGNVAFPHLPGSAPSWPSLVDTSKQWDYYARREKDRDRERDRDRERDRDRDRERERTRERERERDHSPTPSVFNSDEERYRYREYAERGYERHRASREKEERHRERRHREKEETRHKSSRSNSRRRHESEEGDSHRRHKHKKSKRSKEGKEAGSEPAPEQESTEATPAE.

Residues 1–10 (MSAGEVERLV) show a composition bias toward basic and acidic residues. 3 disordered regions span residues 1–81 (MSAG…EDDV), 223–291 (QGRT…ESPD), and 334–588 (VDNN…TPAE). Positions 1-96 (MSAGEVERLV…DIKTGAPQYG (96 aa)) are sufficient for interaction with PAPOLA. The segment at 1 to 341 (MSAGEVERLV…TAVDNNFSKP (341 aa)) is necessary for stimulating PAPOLA activity. 2 stretches are compositionally biased toward acidic residues: residues 19–40 (GDEEEEWLYGDENEVERPEEEN) and 66–80 (TEDDSDSDSDDDEDD). Phosphoserine is present on residues serine 70, serine 72, and serine 74. The tract at residues 122–228 (KGVDLDAPGS…FKVQQGRTGN (107 aa)) is sufficient for interaction with CPSF4. A compositionally biased stretch (low complexity) spans 259-270 (STSSQSQTSTAS). The segment covering 280-291 (WQDRYGRAESPD) has biased composition (basic and acidic residues). The residue at position 289 (serine 289) is a Phosphoserine. Over residues 340-398 (KPPPFFPPGAPPTHLPPPPFLPPPPTVSTAPPLIPPPGIPITVPPPGFPPPPGAPPPSL) the composition is skewed to pro residues. Tyrosine 420 is modified (phosphotyrosine). The segment at 437–588 (SLVDTSKQWD…QESTEATPAE (152 aa)) is sufficient for interaction with CPSF1 and CSTF3. Basic and acidic residues predominate over residues 448 to 486 (YARREKDRDRERDRDRERDRDRDRERERTRERERERDHS). Residues 451-484 (REKDRDRERDRDRERDRDRDRERERTRERERERD) are arg/Asp/Glu-rich domain. At serine 486 the chain carries Phosphoserine. Position 488 is a phosphothreonine (threonine 488). Serine 490 and serine 494 each carry phosphoserine. Basic and acidic residues predominate over residues 495-522 (DEERYRYREYAERGYERHRASREKEERH). Positions 536-545 (KSSRSNSRRR) are enriched in basic residues. A Phosphoserine modification is found at serine 548. The segment covering 554–564 (HRRHKHKKSKR) has biased composition (basic residues).

This sequence belongs to the FIP1 family. As to quaternary structure, component of the cleavage and polyadenylation specificity factor (CPSF) complex, composed of CPSF1, CPSF2, CPSF3, CPSF4 and FIP1L1. Found in a complex with CPSF1, FIP1L1 and PAPOLA. Interacts with CPSF1, CPSF4, CSTF2 and CSTF3. Interacts with AHCYL1 (when phosphorylated); the interaction is direct and associates AHCYL1 with the CPSF complex and RNA. Interacts with PAPOLA; the interaction seems to be increased by the interaction with AHCYL1. Interacts with NUDT21/CPSF5; this interaction occurs in a RNA sequence-specific manner. Interacts (preferentially via unphosphorylated form and Arg/Glu/Asp-rich domain) with CPSF6 (via Arg/Ser-rich domain); this interaction mediates, at least in part, the interaction between the CFIm and CPSF complexes and may be inhibited by CPSF6 hyper-phosphorylation. Interacts (preferentially via unphosphorylated form and Arg/Asp/Glu-rich domain) with CPSF7 (via Arg/Ser-rich domain); this interaction mediates, at least in part, the interaction between the CFIm and CPSF complexes and may be inhibited by CPSF7 hyper-phosphorylation.

Its subcellular location is the nucleus. In terms of biological role, component of the cleavage and polyadenylation specificity factor (CPSF) complex that plays a key role in pre-mRNA 3'-end formation, recognizing the AAUAAA signal sequence and interacting with poly(A) polymerase and other factors to bring about cleavage and poly(A) addition. FIP1L1 contributes to poly(A) site recognition and stimulates poly(A) addition. Binds to U-rich RNA sequence elements surrounding the poly(A) site. May act to tether poly(A) polymerase to the CPSF complex. The sequence is that of Pre-mRNA 3'-end-processing factor FIP1 (FIP1L1) from Pongo abelii (Sumatran orangutan).